A 118-amino-acid chain; its full sequence is NADH-quinone oxidoreductase subunit A (118 aa).

The next 3 helical transmembrane spans lie at 6–26, 61–81, and 87–107; these read LIIGIFLIASFIFGMVVLLTA, FMYGLVFLLFDVETVFLLPWA, and LGLFALFEMVIFIGILIIGLW.

The protein belongs to the complex I subunit 3 family. NDH-1 is composed of 14 different subunits. Subunits NuoA, H, J, K, L, M, N constitute the membrane sector of the complex.

It is found in the cell membrane. The catalysed reaction is a quinone + NADH + 5 H(+)(in) = a quinol + NAD(+) + 4 H(+)(out). In terms of biological role, NDH-1 shuttles electrons from NADH, via FMN and iron-sulfur (Fe-S) centers, to quinones in the respiratory chain. The immediate electron acceptor for the enzyme in this species is believed to be a menaquinone. Couples the redox reaction to proton translocation (for every two electrons transferred, four hydrogen ions are translocated across the cytoplasmic membrane), and thus conserves the redox energy in a proton gradient. The protein is NADH-quinone oxidoreductase subunit A of Clostridium beijerinckii (strain ATCC 51743 / NCIMB 8052) (Clostridium acetobutylicum).